The chain runs to 775 residues: Transposon TX1 uncharacterized 82 kDa protein (775 aa).

Over residues 1-10 (MGGNKKESYK) the composition is skewed to basic and acidic residues. Disordered stretches follow at residues 1-46 (MGGN…ASTS), 256-277 (PKGQIKTTAPVPAPSASNKTSY), and 535-565 (PIQDPADKTAGKDGEGGVVDTEEGSQTTSTV). Over residues 35 to 46 (EPMSKSPIASTS) the composition is skewed to polar residues. The span at 539–549 (PADKTAGKDGE) shows a compositional bias: basic and acidic residues.

The polypeptide is Transposon TX1 uncharacterized 82 kDa protein (Xenopus laevis (African clawed frog)).